The following is a 225-amino-acid chain: NAD(P)H-quinone oxidoreductase subunit K, chloroplastic (225 aa).

[4Fe-4S] cluster-binding residues include C43, C44, C108, and C139.

The protein belongs to the complex I 20 kDa subunit family. NDH is composed of at least 16 different subunits, 5 of which are encoded in the nucleus. The cofactor is [4Fe-4S] cluster.

It localises to the plastid. The protein localises to the chloroplast thylakoid membrane. It catalyses the reaction a plastoquinone + NADH + (n+1) H(+)(in) = a plastoquinol + NAD(+) + n H(+)(out). The catalysed reaction is a plastoquinone + NADPH + (n+1) H(+)(in) = a plastoquinol + NADP(+) + n H(+)(out). Functionally, NDH shuttles electrons from NAD(P)H:plastoquinone, via FMN and iron-sulfur (Fe-S) centers, to quinones in the photosynthetic chain and possibly in a chloroplast respiratory chain. The immediate electron acceptor for the enzyme in this species is believed to be plastoquinone. Couples the redox reaction to proton translocation, and thus conserves the redox energy in a proton gradient. This is NAD(P)H-quinone oxidoreductase subunit K, chloroplastic from Brachypodium distachyon (Purple false brome).